The primary structure comprises 266 residues: Small ribosomal subunit protein uS2 (266 aa).

Residues Glu-238 to Glu-266 are disordered. The span at Lys-248–Lys-258 shows a compositional bias: basic residues.

The protein belongs to the universal ribosomal protein uS2 family.

This Xylella fastidiosa (strain M12) protein is Small ribosomal subunit protein uS2.